Reading from the N-terminus, the 139-residue chain is Transcription initiation factor IIA small chain homolog (139 aa).

The tract at residues 113–139 is disordered; sequence LSAQGPSKRVNRAHAAAAGDDEDDDSD.

Belongs to the TFIIA subunit 2 family.

Its subcellular location is the nucleus. The sequence is that of Transcription initiation factor IIA small chain homolog from Caenorhabditis elegans.